A 1704-amino-acid polypeptide reads, in one-letter code: ABC transporter ced-7 (1704 aa).

Residues 23-43 (VWTLFELIIPCLLLGPLVYLV) traverse the membrane as a helical segment. 2 N-linked (GlcNAc...) asparagine glycosylation sites follow: Asn-126 and Asn-145. The next 3 membrane-spanning stretches (helical) occupy residues 256–276 (AFID…VIHI), 306–326 (VVMA…PLTF), and 334–354 (AALI…GAFV). An N-linked (GlcNAc...) asparagine glycan is attached at Asn-359. 2 helical membrane-spanning segments follow: residues 362 to 382 (NSAI…SYKL) and 389 to 409 (ISSC…AVEA). 2 N-linked (GlcNAc...) asparagine glycosylation sites follow: Asn-421 and Asn-427. The helical transmembrane segment at 436–456 (GWALVMMIVDILWMSIGALVV) threads the bilayer. Residue Asn-481 is glycosylated (N-linked (GlcNAc...) asparagine). A disordered region spans residues 511–536 (NPMASTSLNPPNADSDSLLEGSTEAD). The span at 512 to 525 (PMASTSLNPPNADS) shows a compositional bias: polar residues. The 232-residue stretch at 546-777 (IIVRNLVKIW…FGTGYLLTVV (232 aa)) folds into the ABC transporter 1 domain. Residue 580-587 (GHNGAGKS) coordinates ATP. Asn-678, Asn-727, and Asn-899 each carry an N-linked (GlcNAc...) asparagine glycan. 2 stretches are compositionally biased toward polar residues: residues 888–902 (RQNS…NASE) and 911–921 (DTQSSTKSADS). The tract at residues 888 to 933 (RQNSRISHNSRNASEPSLKPAGYDTQSSTKSADSYQKLMDSQARGP) is disordered. The chain crosses the membrane as a helical span at residues 963-983 (LFTQVLIPIILLGLVGSLTTL). 3 N-linked (GlcNAc...) asparagine glycosylation sites follow: Asn-986, Asn-1012, and Asn-1045. 7 helical membrane-spanning segments follow: residues 1126–1146 (LAPM…MFLI), 1153–1173 (FAHQ…ASLI), 1176–1196 (GILY…FHWM), 1201–1221 (AIVI…IYAV), 1234–1254 (LLII…FLIF), 1266–1286 (ILVN…AIIT), and 1311–1331 (LMGT…FKFV). In terms of domain architecture, ABC transporter 2 spans 1379–1603 (LVIKDLTKTF…YGNNYTMTLS (225 aa)). 1411 to 1418 (GVNGAGKT) provides a ligand contact to ATP. N-linked (GlcNAc...) asparagine glycosylation is found at Asn-1597 and Asn-1632.

Belongs to the ABC transporter superfamily. ABCA family. Ubiquitous in embryos. Expressed in larval germline precursors. Expression in larvae and adults is seen in amphid sheath cells, pharyngeal-intestinal valve and phasmid sheath cells. Low levels of expression are also seen in gonadal sheath cells.

The protein resides in the membrane. In terms of biological role, functions in the engulfment of cell corpses during embryonic programmed cell death to translocate molecules that mediate homotypic adhesion between cell surfaces of the dying and engulfing cells. This Caenorhabditis elegans protein is ABC transporter ced-7 (ced-7).